The primary structure comprises 181 residues: Nucleoside triphosphate/diphosphate phosphatase (181 aa).

Arg26 serves as the catalytic Proton donor. The Mg(2+) site is built by Asn90, Asp106, Asp108, Asp110, Asp123, and Glu126.

Belongs to the Ntdp family. It depends on Mg(2+) as a cofactor.

It carries out the reaction a ribonucleoside 5'-triphosphate + H2O = a ribonucleoside 5'-diphosphate + phosphate + H(+). The catalysed reaction is a ribonucleoside 5'-diphosphate + H2O = a ribonucleoside 5'-phosphate + phosphate + H(+). Functionally, has nucleoside phosphatase activity towards nucleoside triphosphates and nucleoside diphosphates. This chain is Nucleoside triphosphate/diphosphate phosphatase, found in Ligilactobacillus salivarius (strain UCC118) (Lactobacillus salivarius).